The chain runs to 202 residues: Glycerol-3-phosphate acyltransferase (202 aa).

The next 6 membrane-spanning stretches (helical) occupy residues 3 to 23 (NLIIYAFIYLLGSISFGLILT), 61 to 81 (IATIILDFAKAAIPLLILKFL), 87 to 107 (LLWSVAVLAIFGHCFSIYLLF), 117 to 137 (AGAMIVLLPLEVLTAFIVWAV), 144 to 164 (ISSLASLAALLAFIVSSFIFN), and 167 to 187 (LEIHTHAPVFIIAFIIVYKHL).

The protein belongs to the PlsY family. Probably interacts with PlsX.

The protein resides in the cell inner membrane. It carries out the reaction an acyl phosphate + sn-glycerol 3-phosphate = a 1-acyl-sn-glycero-3-phosphate + phosphate. Its pathway is lipid metabolism; phospholipid metabolism. Its function is as follows. Catalyzes the transfer of an acyl group from acyl-phosphate (acyl-PO(4)) to glycerol-3-phosphate (G3P) to form lysophosphatidic acid (LPA). This enzyme utilizes acyl-phosphate as fatty acyl donor, but not acyl-CoA or acyl-ACP. The sequence is that of Glycerol-3-phosphate acyltransferase from Campylobacter jejuni subsp. doylei (strain ATCC BAA-1458 / RM4099 / 269.97).